A 550-amino-acid polypeptide reads, in one-letter code: Probable endochitinase (550 aa).

The N-terminal stretch at 1–16 is a signal peptide; that stretch reads MLHYLATILWLAVAHA. N-linked (GlcNAc...) asparagine; by host glycans are attached at residues Asn-146 and Asn-172. The 401-residue stretch at 147-547 folds into the GH18 domain; the sequence is KTVAAYFVEW…NAMNERVRVK (401 aa). Glu-304 serves as the catalytic Proton donor. Asn-344 carries an N-linked (GlcNAc...) asparagine; by host glycan. A Prevents secretion from ER motif is present at residues 547–550; that stretch reads KDEL.

Belongs to the glycosyl hydrolase 18 family. Chitinase class II subfamily.

Its subcellular location is the host endoplasmic reticulum lumen. It catalyses the reaction Random endo-hydrolysis of N-acetyl-beta-D-glucosaminide (1-&gt;4)-beta-linkages in chitin and chitodextrins.. The protein is Probable endochitinase of Orgyia pseudotsugata (Douglas-fir tussock moth).